We begin with the raw amino-acid sequence, 130 residues long: Large ribosomal subunit protein bL21 (130 aa).

Belongs to the bacterial ribosomal protein bL21 family. In terms of assembly, part of the 50S ribosomal subunit. Contacts protein L20.

Functionally, this protein binds to 23S rRNA in the presence of protein L20. The polypeptide is Large ribosomal subunit protein bL21 (Trichormus variabilis (strain ATCC 29413 / PCC 7937) (Anabaena variabilis)).